The sequence spans 378 residues: Coiled-coil domain-containing protein 74A (378 aa).

Disordered stretches follow at residues 1–52 (MSGA…RNLD), 128–211 (GGPS…EEPL), and 301–328 (EGSQRPQAAPEEASFPRDQEATHFPKVS). Residues 34–44 (LRPQSPQLRQS) show a composition bias toward polar residues. Residues 47-90 (QKRNLDLEKSLQFLQQQHSEMLAKLHEEIEHLKRENKDLHYKLI) adopt a coiled-coil conformation. Residues 141 to 151 (RTHRPGGKRGR) are compositionally biased toward basic residues. The span at 165–182 (DSLSMSSFQSVKSISNSG) shows a compositional bias: polar residues. 2 stretches are compositionally biased toward basic and acidic residues: residues 194–205 (QDSKADVSQKAD) and 314–323 (SFPRDQEATH).

This is Coiled-coil domain-containing protein 74A (CCDC74A) from Homo sapiens (Human).